The sequence spans 259 residues: UPF0246 protein VFMJ11_2214 (259 aa).

Belongs to the UPF0246 family.

The sequence is that of UPF0246 protein VFMJ11_2214 from Aliivibrio fischeri (strain MJ11) (Vibrio fischeri).